A 764-amino-acid polypeptide reads, in one-letter code: Reticulon-1 (764 aa).

Disordered regions lie at residues 1-37 (MAAN…GGAL), 115-147 (PDIK…SGIE), 247-400 (LYNS…SEIE), and 455-475 (ESCD…DSPM). Residues 261–282 (VTISFTGMETTLQTEYPENQQG) show a composition bias toward polar residues. The span at 328–337 (EEQRKYKISE) shows a compositional bias: basic and acidic residues. Residues 578–764 (AIELLYWRDI…AKIPGTKQKE (187 aa)) form the Reticulon domain. Helical transmembrane passes span 607-627 (FSVV…TISF) and 696-716 (VLMW…LLIM).

The protein resides in the endoplasmic reticulum membrane. It is found in the nucleus. In terms of biological role, inhibits amyloid precursor protein processing, probably by blocking BACE1 activity. The chain is Reticulon-1 from Xenopus tropicalis (Western clawed frog).